Consider the following 125-residue polypeptide: uncharacterized protein (125 aa).

The protein resides in the plastid. Its subcellular location is the chloroplast. This is an uncharacterized protein from Guillardia theta (Cryptophyte).